Here is a 247-residue protein sequence, read N- to C-terminus: Synaptogyrin homolog 1 (247 aa).

One can recognise an MARVEL domain in the interval 21–175 (FFKKPTVLFR…AAFFAWRRYE (155 aa)). A run of 4 helical transmembrane segments spans residues 25–45 (PTVL…YSVS), 69–89 (CSFA…LIVL), 105–125 (AVLA…IGFF), and 151–171 (FGIL…FFAW). A disordered region spans residues 206–247 (DSTGIGHVGAPPPQSSYQSGAAPQTMQQPPSNPYTQSEGYGY). A compositionally biased stretch (polar residues) spans 220–247 (SSYQSGAAPQTMQQPPSNPYTQSEGYGY).

This sequence belongs to the synaptogyrin family. In terms of tissue distribution, expressed in a wide variety of neurons and is expressed weakly in the non-neuronal distal tip cells. A punctate pattern was observed in the ventral and dorsal nerve cords and the nerve ring. Weak expression is seen in neuronal cell bodies and commissures.

The protein resides in the membrane. The chain is Synaptogyrin homolog 1 (sng-1) from Caenorhabditis elegans.